The following is a 116-amino-acid chain: Large ribosomal subunit protein bL17 (116 aa).

This sequence belongs to the bacterial ribosomal protein bL17 family. Part of the 50S ribosomal subunit. Contacts protein L32.

The chain is Large ribosomal subunit protein bL17 from Synechococcus elongatus (strain ATCC 33912 / PCC 7942 / FACHB-805) (Anacystis nidulans R2).